Here is a 162-residue protein sequence, read N- to C-terminus: NADH-quinone oxidoreductase subunit I (162 aa).

4Fe-4S ferredoxin-type domains are found at residues 53–83 (LRRY…IESE) and 93–122 (TRYD…ETHI). [4Fe-4S] cluster contacts are provided by cysteine 63, cysteine 66, cysteine 69, cysteine 73, cysteine 102, cysteine 105, cysteine 108, and cysteine 112.

It belongs to the complex I 23 kDa subunit family. As to quaternary structure, NDH-1 is composed of 14 different subunits. Subunits NuoA, H, J, K, L, M, N constitute the membrane sector of the complex. It depends on [4Fe-4S] cluster as a cofactor.

It is found in the cell inner membrane. It catalyses the reaction a quinone + NADH + 5 H(+)(in) = a quinol + NAD(+) + 4 H(+)(out). Functionally, NDH-1 shuttles electrons from NADH, via FMN and iron-sulfur (Fe-S) centers, to quinones in the respiratory chain. The immediate electron acceptor for the enzyme in this species is believed to be ubiquinone. Couples the redox reaction to proton translocation (for every two electrons transferred, four hydrogen ions are translocated across the cytoplasmic membrane), and thus conserves the redox energy in a proton gradient. The protein is NADH-quinone oxidoreductase subunit I of Herminiimonas arsenicoxydans.